Consider the following 141-residue polypeptide: Small ribosomal subunit protein bS6 (141 aa).

The interval 110–141 (SRTKVSDQPAAVEAAEAPAAPAAQEESAPASA) is disordered. Residues 117–141 (QPAAVEAAEAPAAPAAQEESAPASA) show a composition bias toward low complexity.

It belongs to the bacterial ribosomal protein bS6 family.

Its function is as follows. Binds together with bS18 to 16S ribosomal RNA. The sequence is that of Small ribosomal subunit protein bS6 from Acidobacterium capsulatum (strain ATCC 51196 / DSM 11244 / BCRC 80197 / JCM 7670 / NBRC 15755 / NCIMB 13165 / 161).